The primary structure comprises 502 residues: MATESALIKVHVKSPSNKYDVEIAADASVSELKDKVLVFVPTANKEQVCIIYTGKILKDEETLTQHKIADGHTVHLVIRNQARPTPAPAAATPTASSAPSSNPTPSSQPNPTNNPFAAMGGMGSPADILNNPDAMRSVMDNPITQQLLGNPEFMRTIIQSNPQFQALIERNPEVGHILNDPNVMRQTMEMIRNPNMFQEMMRNHDQAIRNLQGIPGGEAALERLYNDVQEPLLNSATNSLSGNPFASLRGDQSSEPRVDRAGQENNEALPNPWASNANQATNNQSNNRSADFNSLLDSPGISSLMEQMMSNPSMQASMFSPEVINSIRQNMSNNPGLIDSIVGQIPSARDNPQISEGIRRSFPQMLNMMSDPSVMEAMRNPRVSEAFRQIQEGFSTLRREAPQLLNLFQAGAMGGGAFGSDANASSAGANSANGLADLFNSMNMGGGRPSSTAAPVNPEQTYASQLEQLQSMGFSDRARNVAALTATFGDLNAAVERLLNSP.

Positions 8–83 constitute a Ubiquitin-like domain; that stretch reads IKVHVKSPSN…VHLVIRNQAR (76 aa). Over residues 84–115 the composition is skewed to low complexity; that stretch reads PTPAPAAATPTASSAPSSNPTPSSQPNPTNNP. The segment at 84–136 is disordered; sequence PTPAPAAATPTASSAPSSNPTPSSQPNPTNNPFAAMGGMGSPADILNNPDAMR. STI1 domains lie at 124-157 and 161-200; these read SPAD…MRTI and NPQF…FQEM. Positions 235–251 are enriched in polar residues; sequence SATNSLSGNPFASLRGD. Positions 235 to 294 are disordered; it reads SATNSLSGNPFASLRGDQSSEPRVDRAGQENNEALPNPWASNANQATNNQSNNRSADFNS. The span at 252–262 shows a compositional bias: basic and acidic residues; it reads QSSEPRVDRAG. The segment covering 274–290 has biased composition (low complexity); that stretch reads ASNANQATNNQSNNRSA. STI1 domains follow at residues 289–327 and 351–387; these read SADF…INSI and NPQI…SEAF. The 47-residue stretch at 455–501 folds into the UBA domain; sequence PVNPEQTYASQLEQLQSMGFSDRARNVAALTATFGDLNAAVERLLNS.

As to expression, expressed in the pharynx, hypodermis, intestine and head neurons. Upon ER stress, expressed predominantly in pharyngeal muscle, hypodermis and intestine.

Functionally, may play a role in the ER-associated protein degradation pathway (ERAD) possibly via its interaction with ER-localized proteins ubxn-4 and cdc-48.1 and/or cdc48.2, providing a link between the polyubiquitinated ERAD substrates and the proteasome. Also plays an important role in the regulation of other protein degradation mechanisms and pathways including ubiquitin-proteasome system (UPS) and autophagy. Mediates the proteasomal targeting of misfolded or accumulated proteins for degradation by binding (via UBA domain) to their polyubiquitin chains and by interacting (via ubiquitin-like domain) with the subunits of the proteasome. Collaborates with POST (F36D4.5) in the export of ubiquitinated proteins from the nucleus to the cytoplasm. Also acts as a regulator of DNA repair by inhibiting homologous recombination repair, thereby redirecting double-strand break repair toward non-homologous end joining (NHEJ). This is Ubiquilin from Caenorhabditis elegans.